We begin with the raw amino-acid sequence, 262 residues long: tRNA pseudouridine synthase A (262 aa).

Catalysis depends on D54, which acts as the Nucleophile. Position 113 (Y113) interacts with substrate.

Belongs to the tRNA pseudouridine synthase TruA family. In terms of assembly, homodimer.

It carries out the reaction uridine(38/39/40) in tRNA = pseudouridine(38/39/40) in tRNA. Its function is as follows. Formation of pseudouridine at positions 38, 39 and 40 in the anticodon stem and loop of transfer RNAs. The protein is tRNA pseudouridine synthase A of Lactobacillus delbrueckii subsp. bulgaricus (strain ATCC BAA-365 / Lb-18).